The sequence spans 343 residues: MKLEEFNYELPEELIAQKPLANRSKSRLMVVSINSSDVQHNHFEKLPQYVKDGDLFVINNSRVIPARLFGNKKQTGGKLEMVLLHPLEGKDEWEVLVKPGKRAKPGNVFEFGQETLEAEILDITPEGSRRVKFYYQGNFQQVLDQLGQMPLPPYIKEELEDPERYQTVYAKESGSVAAPTAGLHFTPEIISDIKDQGGEVAELTLHVGLGTFRPVETPNIEEHEMHAEYYQLPEETAKKINQAKQRGNRVIAVGTTVVRTLETVKTDDGLVQPGKGWTDIFIYPGYEFKVVDAMLTNFHLPKSTLLMLVSAFAGKDLIMSAYQAAIEERYRFFSFGDAMFIKN.

This sequence belongs to the QueA family. Monomer.

It is found in the cytoplasm. It carries out the reaction 7-aminomethyl-7-carbaguanosine(34) in tRNA + S-adenosyl-L-methionine = epoxyqueuosine(34) in tRNA + adenine + L-methionine + 2 H(+). It functions in the pathway tRNA modification; tRNA-queuosine biosynthesis. Functionally, transfers and isomerizes the ribose moiety from AdoMet to the 7-aminomethyl group of 7-deazaguanine (preQ1-tRNA) to give epoxyqueuosine (oQ-tRNA). This chain is S-adenosylmethionine:tRNA ribosyltransferase-isomerase, found in Natranaerobius thermophilus (strain ATCC BAA-1301 / DSM 18059 / JW/NM-WN-LF).